The sequence spans 212 residues: Thiamine-phosphate synthase (212 aa).

4-amino-2-methyl-5-(diphosphooxymethyl)pyrimidine contacts are provided by residues 33–37 (QMRFK) and Asn65. The Mg(2+) site is built by Asp66 and Asp85. Thr104 serves as a coordination point for 4-amino-2-methyl-5-(diphosphooxymethyl)pyrimidine. 130–132 (TNT) provides a ligand contact to 2-[(2R,5Z)-2-carboxy-4-methylthiazol-5(2H)-ylidene]ethyl phosphate. Lys133 contributes to the 4-amino-2-methyl-5-(diphosphooxymethyl)pyrimidine binding site. Gly166 contacts 2-[(2R,5Z)-2-carboxy-4-methylthiazol-5(2H)-ylidene]ethyl phosphate.

Belongs to the thiamine-phosphate synthase family. It depends on Mg(2+) as a cofactor.

The catalysed reaction is 2-[(2R,5Z)-2-carboxy-4-methylthiazol-5(2H)-ylidene]ethyl phosphate + 4-amino-2-methyl-5-(diphosphooxymethyl)pyrimidine + 2 H(+) = thiamine phosphate + CO2 + diphosphate. The enzyme catalyses 2-(2-carboxy-4-methylthiazol-5-yl)ethyl phosphate + 4-amino-2-methyl-5-(diphosphooxymethyl)pyrimidine + 2 H(+) = thiamine phosphate + CO2 + diphosphate. It carries out the reaction 4-methyl-5-(2-phosphooxyethyl)-thiazole + 4-amino-2-methyl-5-(diphosphooxymethyl)pyrimidine + H(+) = thiamine phosphate + diphosphate. The protein operates within cofactor biosynthesis; thiamine diphosphate biosynthesis; thiamine phosphate from 4-amino-2-methyl-5-diphosphomethylpyrimidine and 4-methyl-5-(2-phosphoethyl)-thiazole: step 1/1. Its function is as follows. Condenses 4-methyl-5-(beta-hydroxyethyl)thiazole monophosphate (THZ-P) and 2-methyl-4-amino-5-hydroxymethyl pyrimidine pyrophosphate (HMP-PP) to form thiamine monophosphate (TMP). This chain is Thiamine-phosphate synthase, found in Flavobacterium johnsoniae (strain ATCC 17061 / DSM 2064 / JCM 8514 / BCRC 14874 / CCUG 350202 / NBRC 14942 / NCIMB 11054 / UW101) (Cytophaga johnsonae).